The primary structure comprises 30 residues: KAWFVLSMRAVGGLFVDLWTSVAKTVKGWL.

The catalysed reaction is Release of a C-terminal alanine from a peptide or a variety of pteroyl or acyl groups.. This is Alanine carboxypeptidase from Geobacillus stearothermophilus (Bacillus stearothermophilus).